A 339-amino-acid chain; its full sequence is uncharacterized protein (339 aa).

The disordered stretch occupies residues 1–24 (IQPARRHTKNTNMAKHTTKGTGHS). Over residues 10-21 (NTNMAKHTTKGT) the composition is skewed to polar residues.

The protein resides in the mitochondrion. This is an uncharacterized protein from Zea mays (Maize).